The primary structure comprises 354 residues: Guanine nucleotide-binding protein G(o) subunit alpha (354 aa).

The N-myristoyl glycine moiety is linked to residue Gly-2. Residue Cys-3 is the site of S-palmitoyl cysteine attachment. A G-alpha domain is found at 32–354 (KDIKLLLLGA…ANNLRGCGLY (323 aa)). The interval 35-48 (KLLLLGAGESGKST) is G1 motif. GTP contacts are provided by residues 40–47 (GAGESGKS), 176–182 (LRTRVKT), 201–205 (DVGGQ), 270–273 (NKKD), and Ala-326. The Mg(2+) site is built by Ser-47 and Thr-182. The G2 motif stretch occupies residues 174–182 (DILRTRVKT). Residues 197–206 (FKLFDVGGQR) form a G3 motif region. A G4 motif region spans residues 266-273 (ILFLNKKD). Positions 324 to 329 (TCATDT) are G5 motif.

It belongs to the G-alpha family. G(i/o/t/z) subfamily. As to quaternary structure, g proteins are composed of 3 units; alpha, beta and gamma. The alpha chain contains the guanine nucleotide binding site.

Its function is as follows. Guanine nucleotide-binding proteins (G proteins) are involved as modulators or transducers in various transmembrane signaling systems. The G(o) protein function is not clear. This chain is Guanine nucleotide-binding protein G(o) subunit alpha, found in Locusta migratoria (Migratory locust).